A 235-amino-acid polypeptide reads, in one-letter code: N-alpha-acetyltransferase 10 (235 aa).

The residue at position 1 (M1) is an N-acetylmethionine. An interaction with NAA15 region spans residues 1-58 (MNIRNARPEDLMNMQHCNLLCLPENYQMKYYFYHGLSWPQLSYIAEDENGKIVGYVLA). The region spanning 1–152 (MNIRNARPED…DAYAMKRDLT (152 aa)) is the N-acetyltransferase domain. An N6-acetyllysine; by autocatalysis modification is found at K136. The span at 196 to 213 (EEKGLAAEDSGGDSKDLS) shows a compositional bias: basic and acidic residues. The segment at 196-235 (EEKGLAAEDSGGDSKDLSEVSETTESTDVKDSSEASDSAS) is disordered. At S205 the chain carries Phosphoserine. S209 carries the post-translational modification Phosphoserine; by IKKB. A phosphoserine mark is found at S213 and S216.

Belongs to the acetyltransferase family. ARD1 subfamily. Component of the N-terminal acetyltransferase A complex (also called the NatA complex) composed of NAA10 and NAA15. Interacts with NAA15. Component of the N-terminal acetyltransferase A (NatA)/HYPK complex at least composed of NAA10, NAA15 and HYPK, which has N-terminal acetyltransferase activity. In complex with NAA15, interacts with HYPK. Component of the N-terminal acetyltransferase E (NatE) complex at least composed of NAA10, NAA15 and NAA50. Within the complex interacts with NAA15; the interaction is required for binding to NAAT50. Interacts with NAAT50. The interaction of the NatA complex with NAA50 reduces the acetylation activity of the NatA complex. Component of the N-terminal acetyltransferase E (NatE)/HYPK complex at least composed of NAA10, NAA15, NAA50 and HYPK. In complex with NAA15, interacts with HYPK; the interaction with HYPK reduces the capacity of the NatA complex to interact with NAA50. Interacts with HIF1A (via its ODD domain); the interaction increases HIF1A protein stability during normoxia, an down-regulates it when induced by hypoxia. Interacts with the ribosome. Binds to MYLK. Interacts with NAA16. Interacts (via its C-terminal domain) with TSC2, leading to its acetylation. Interacts with IKBKB. Interacts with HSPA1A and HSPA1B leading to its acetylation. In terms of processing, cleaved by caspases during apoptosis. Phosphorylation by IKBKB/IKKB at Ser-209 destabilises NAA10 and promotes its proteasome-mediated degradation. Post-translationally, autoacetylated at Lys-136 which stimulates its catalytic activity. In terms of tissue distribution, ubiquitous.

The protein localises to the cytoplasm. The protein resides in the nucleus. The catalysed reaction is N-terminal glycyl-[protein] + acetyl-CoA = N-terminal N(alpha)-acetylglycyl-[protein] + CoA + H(+). It carries out the reaction N-terminal L-alanyl-[protein] + acetyl-CoA = N-terminal N(alpha)-acetyl-L-alanyl-[protein] + CoA + H(+). It catalyses the reaction N-terminal L-seryl-[protein] + acetyl-CoA = N-terminal N(alpha)-acetyl-L-seryl-[protein] + CoA + H(+). The enzyme catalyses N-terminal L-valyl-[protein] + acetyl-CoA = N-terminal N(alpha)-acetyl-L-valyl-[protein] + CoA + H(+). The catalysed reaction is N-terminal L-cysteinyl-[protein] + acetyl-CoA = N-terminal N(alpha)-acetyl-L-cysteinyl-[protein] + CoA + H(+). It carries out the reaction N-terminal L-threonyl-[protein] + acetyl-CoA = N-terminal N(alpha)-acetyl-L-threonyl-[protein] + CoA + H(+). In terms of biological role, catalytic subunit of the N-terminal acetyltransferase A (NatA) complex which displays alpha (N-terminal) acetyltransferase activity. Acetylates amino termini that are devoid of initiator methionine. The alpha (N-terminal) acetyltransferase activity may be important for vascular, hematopoietic and neuronal growth and development. Without NAA15, displays epsilon (internal) acetyltransferase activity towards HIF1A, thereby promoting its degradation. Represses MYLK kinase activity by acetylation, and thus represses tumor cell migration. Acetylates, and stabilizes TSC2, thereby repressing mTOR activity and suppressing cancer development. Acetylates HSPA1A and HSPA1B at 'Lys-77' which enhances its chaperone activity and leads to preferential binding to co-chaperone HOPX. Acetylates HIST1H4A. Acts as a negative regulator of sister chromatid cohesion during mitosis. The protein is N-alpha-acetyltransferase 10 (Naa10) of Mus musculus (Mouse).